Consider the following 861-residue polypeptide: DNA mismatch repair protein MutS (861 aa).

G617 to S624 contributes to the ATP binding site. Residues E799 to Q822 are disordered. Residues P808–P820 are compositionally biased toward low complexity.

This sequence belongs to the DNA mismatch repair MutS family.

Its function is as follows. This protein is involved in the repair of mismatches in DNA. It is possible that it carries out the mismatch recognition step. This protein has a weak ATPase activity. The chain is DNA mismatch repair protein MutS from Pseudomonas putida (strain GB-1).